Reading from the N-terminus, the 334-residue chain is Flavonol synthase/flavanone 3-hydroxylase (334 aa).

In terms of domain architecture, Fe2OG dioxygenase spans 196–295; it reads DLVYLMKINY…RMSWPVFLEP (100 aa). Positions 220, 222, and 276 each coordinate Fe cation.

It belongs to the iron/ascorbate-dependent oxidoreductase family. The cofactor is Fe cation. L-ascorbate is required as a cofactor.

It localises to the cytoplasm. The enzyme catalyses a (2R,3R)-dihydroflavonol + 2-oxoglutarate + O2 = a flavonol + succinate + CO2 + H2O. It carries out the reaction a (2S)-flavan-4-one + 2-oxoglutarate + O2 = a (2R,3R)-dihydroflavonol + succinate + CO2. Its pathway is secondary metabolite biosynthesis; flavonoid biosynthesis. Its function is as follows. Catalyzes the formation of flavonols from dihydroflavonols. It can act on dihydrokaempferol to produce kaempferol, on dihydroquercetin to produce quercitin and on dihydromyricetin to produce myricetin. This is Flavonol synthase/flavanone 3-hydroxylase (FLS) from Eustoma exaltatum subsp. russellianum (Bluebells).